Here is a 402-residue protein sequence, read N- to C-terminus: D-mannonate dehydratase (402 aa).

Asparagine 37 and histidine 122 together coordinate substrate. Tyrosine 159 functions as the Proton donor/acceptor in the catalytic mechanism. Aspartate 210 is a Mg(2+) binding site. The Proton donor/acceptor role is filled by histidine 212. Positions 236 and 262 each coordinate Mg(2+). 5 residues coordinate substrate: glutamate 262, arginine 283, histidine 312, aspartate 316, and glutamate 339.

Belongs to the mandelate racemase/muconate lactonizing enzyme family. GalD subfamily. As to quaternary structure, homotetramer. It depends on Mg(2+) as a cofactor.

The enzyme catalyses D-mannonate = 2-dehydro-3-deoxy-D-gluconate + H2O. It participates in carbohydrate metabolism; pentose and glucuronate interconversion. In terms of biological role, catalyzes the dehydration of D-mannonate. Has no detectable activity with a panel of 70 other acid sugars (in vitro). The protein is D-mannonate dehydratase (manD) of Novosphingobium aromaticivorans (strain ATCC 700278 / DSM 12444 / CCUG 56034 / CIP 105152 / NBRC 16084 / F199).